A 303-amino-acid polypeptide reads, in one-letter code: Probable 5-dehydro-4-deoxyglucarate dehydratase (303 aa).

Belongs to the DapA family.

The enzyme catalyses 5-dehydro-4-deoxy-D-glucarate + H(+) = 2,5-dioxopentanoate + CO2 + H2O. It participates in carbohydrate acid metabolism; D-glucarate degradation; 2,5-dioxopentanoate from D-glucarate: step 2/2. This is Probable 5-dehydro-4-deoxyglucarate dehydratase from Acinetobacter baylyi (strain ATCC 33305 / BD413 / ADP1).